A 696-amino-acid polypeptide reads, in one-letter code: Carotenoid dioxygenase carX (696 aa).

Residues 1-16 show a composition bias toward polar residues; it reads MKFLQQNSFTQTSMSQ. The interval 1-27 is disordered; the sequence is MKFLQQNSFTQTSMSQPHEDVSPPLRH. 4 residues coordinate Fe(2+): H244, H298, H361, and H642.

This sequence belongs to the carotenoid oxygenase family. Fe(2+) serves as cofactor.

The catalysed reaction is all-trans-beta-carotene + O2 = 2 all-trans-retinal. It functions in the pathway carotenoid biosynthesis. In terms of biological role, carotenoid dioxygenase; part of the car gene cluster that mediates the biosynthesis of neurosporaxanthin, a carboxylic apocarotenoid acting as an essential protective pigments and leading to orange pigmentation. CarX mediates the cleavage of beta-carotene produced by carAR into retinal, the rhodopsin's chromophore that is involved in the regulation of the carotenoid biosynthetic pathway via a negative feedback mechanism. It can also convert the synthetic compound beta-apo-8'-carotenal but not C35-apocarotenoids such as the acidic apocarotenoid neurosporaxanthin (C35), as well as its corresponding aldehyde beta-apo-4'-carotenal. The protein is Carotenoid dioxygenase carX of Gibberella fujikuroi (strain CBS 195.34 / IMI 58289 / NRRL A-6831) (Bakanae and foot rot disease fungus).